We begin with the raw amino-acid sequence, 541 residues long: Arginine--tRNA ligase (541 aa).

Positions Ala119–His129 match the 'HIGH' region motif.

This sequence belongs to the class-I aminoacyl-tRNA synthetase family. In terms of assembly, monomer.

The protein resides in the cytoplasm. It carries out the reaction tRNA(Arg) + L-arginine + ATP = L-arginyl-tRNA(Arg) + AMP + diphosphate. In Helicobacter acinonychis (strain Sheeba), this protein is Arginine--tRNA ligase.